Consider the following 354-residue polypeptide: UPF0283 protein YcjF (354 aa).

3 helical membrane-spanning segments follow: residues 71 to 91 (MVTV…VQWV), 101 to 121 (IALG…GSVV), and 214 to 234 (ESAL…FIAW).

The protein belongs to the UPF0283 family.

The protein resides in the cell inner membrane. The polypeptide is UPF0283 protein YcjF (ycjF) (Yersinia enterocolitica).